The primary structure comprises 435 residues: Histidine--tRNA ligase (435 aa).

This sequence belongs to the class-II aminoacyl-tRNA synthetase family. In terms of assembly, homodimer.

It is found in the cytoplasm. It catalyses the reaction tRNA(His) + L-histidine + ATP = L-histidyl-tRNA(His) + AMP + diphosphate + H(+). The chain is Histidine--tRNA ligase from Synechococcus sp. (strain ATCC 27144 / PCC 6301 / SAUG 1402/1) (Anacystis nidulans).